The following is a 265-amino-acid chain: Glutamate racemase (265 aa).

Substrate-binding positions include 9 to 10 and 41 to 42; these read DS and YG. The active-site Proton donor/acceptor is the C72. 73 to 74 contributes to the substrate binding site; sequence NT. C183 acts as the Proton donor/acceptor in catalysis. 184–185 serves as a coordination point for substrate; sequence TH.

The protein belongs to the aspartate/glutamate racemases family.

It carries out the reaction L-glutamate = D-glutamate. It functions in the pathway cell wall biogenesis; peptidoglycan biosynthesis. Functionally, provides the (R)-glutamate required for cell wall biosynthesis. This is Glutamate racemase from Lysinibacillus sphaericus (Bacillus sphaericus).